The chain runs to 215 residues: Somatotropin (215 aa).

Residues 1–25 form the signal peptide; sequence MAPGMRVCLLLLIAFTLLGPQRAAA. Histidine 44 provides a ligand contact to Zn(2+). Serine 130 bears the Phosphoserine mark. Glutamate 197 lines the Zn(2+) pocket.

Belongs to the somatotropin/prolactin family.

The protein resides in the secreted. Its function is as follows. Plays an important role in growth control. Its major role in stimulating body growth is to stimulate the liver and other tissues to secrete IGF1. It stimulates both the differentiation and proliferation of myoblasts. It also stimulates amino acid uptake and protein synthesis in muscle and other tissues. This chain is Somatotropin (GH1), found in Monodelphis domestica (Gray short-tailed opossum).